The sequence spans 846 residues: Leucine--tRNA ligase (846 aa).

A 'HIGH' region motif is present at residues 47–57 (PYPSGRIHMGH). Positions 621-625 (KMSKS) match the 'KMSKS' region motif. Lysine 624 serves as a coordination point for ATP.

Belongs to the class-I aminoacyl-tRNA synthetase family.

It localises to the cytoplasm. The catalysed reaction is tRNA(Leu) + L-leucine + ATP = L-leucyl-tRNA(Leu) + AMP + diphosphate. In Zymomonas mobilis subsp. mobilis (strain ATCC 31821 / ZM4 / CP4), this protein is Leucine--tRNA ligase.